The primary structure comprises 98 residues: DNA-binding protein HU (98 aa).

The protein belongs to the bacterial histone-like protein family. As to quaternary structure, homodimer.

In terms of biological role, histone-like DNA-binding protein which is capable of wrapping DNA to stabilize it, and thus to prevent its denaturation under extreme environmental conditions. The protein is DNA-binding protein HU (hup) of Campylobacter jejuni subsp. jejuni serotype O:2 (strain ATCC 700819 / NCTC 11168).